A 145-amino-acid polypeptide reads, in one-letter code: Large ribosomal subunit protein uL15 (145 aa).

The disordered stretch occupies residues 1-52 (MFNLLKPKGASKRRKIVGRGPGSGLGKTSGRGQKGQKARNTSPRLGFEGGQT). Positions 19–33 (RGPGSGLGKTSGRGQ) are enriched in gly residues.

It belongs to the universal ribosomal protein uL15 family. Part of the 50S ribosomal subunit.

Its function is as follows. Binds to the 23S rRNA. The protein is Large ribosomal subunit protein uL15 of Borreliella burgdorferi (strain ATCC 35210 / DSM 4680 / CIP 102532 / B31) (Borrelia burgdorferi).